Here is a 151-residue protein sequence, read N- to C-terminus: Deoxyuridine 5'-triphosphate nucleotidohydrolase (151 aa).

Substrate contacts are provided by residues 70–72 (RSG), Asn83, 87–89 (LID), and Met97.

Belongs to the dUTPase family. The cofactor is Mg(2+).

It carries out the reaction dUTP + H2O = dUMP + diphosphate + H(+). It functions in the pathway pyrimidine metabolism; dUMP biosynthesis; dUMP from dCTP (dUTP route): step 2/2. In terms of biological role, this enzyme is involved in nucleotide metabolism: it produces dUMP, the immediate precursor of thymidine nucleotides and it decreases the intracellular concentration of dUTP so that uracil cannot be incorporated into DNA. This chain is Deoxyuridine 5'-triphosphate nucleotidohydrolase, found in Pseudomonas putida (strain ATCC 47054 / DSM 6125 / CFBP 8728 / NCIMB 11950 / KT2440).